Reading from the N-terminus, the 138-residue chain is MVDYFDYNSLLTRAREQLPEEVFKDVRFEIPSADSFVEGNRTIIKNFKDIAKFMERDPQEFAKYVMKELGTAGDMEGVRLILQGKFGWRMVNEKIQNYVNEYVLCPECGKPDTKIVKEGRIHFLKCTACGAMKPVKTL.

Belongs to the eIF-2-beta/eIF-5 family. In terms of assembly, heterotrimer composed of an alpha, a beta and a gamma chain.

EIF-2 functions in the early steps of protein synthesis by forming a ternary complex with GTP and initiator tRNA. In Methanococcus maripaludis (strain C6 / ATCC BAA-1332), this protein is Translation initiation factor 2 subunit beta.